The chain runs to 648 residues: A-type voltage-gated potassium channel KCND1 (648 aa).

Over 1-183 (MAAGVATWLP…RAFENPHTST (183 aa)) the chain is Cytoplasmic. Residues 2-20 (AAGVATWLPFARAAAVGWL) are interaction with KCNIP1, KCNIP2, and other family members. The interval 2-20 (AAGVATWLPFARAAAVGWL) is interaction with KCNIP2. Zn(2+) is bound by residues H104, C131, and C132. Positions 144–164 (AERLAEDEEAEQAGDGPTLPA) are disordered. A helical transmembrane segment spans residues 184–205 (AALVFYYVTGFFIAVSVIANVV). Over 206–230 (ETIPCRSPTRRPPREQPCGDRFPLA) the chain is Extracellular. Residues 231 to 252 (FFCMDTACVLIFTGEYLLRLFA) form a helical membrane-spanning segment. Residues 253–263 (APSRCRFLRSV) are Cytoplasmic-facing. Residues 264 to 284 (MSLIDVVAILPYYIGLFMPKN) form a helical membrane-spanning segment. Over 285–287 (EDV) the chain is Extracellular. Residues 288–308 (SGAFVTLRVFRVFRIFKFSRH) traverse the membrane as a helical; Voltage-sensor segment. Over 309-323 (SQGLRILGYTLKSCA) the chain is Cytoplasmic. Residues 310–323 (QGLRILGYTLKSCA) are S4-S5 linker. A helical transmembrane segment spans residues 324-345 (SELGFLLFSLTMAIIIFATVMF). Residues 346 to 359 (YAEKGTNKTNFTSI) are Extracellular-facing. N352 and N355 each carry an N-linked (GlcNAc...) asparagine glycan. An intramembrane region (helical) is located at residues 360–371 (PAAFWYTIVTMT). A Selectivity filter motif is present at residues 372 to 377 (TLGYGD). An intramembrane segment occupies 372–379 (TLGYGDMV). Topologically, residues 380–386 (PSTIAGK) are extracellular. Residues 387–415 (IFGSICSLSGVLVIALPVPVIVSNFSRIY) traverse the membrane as a helical segment. Residues 416–648 (HQNQRADKRR…LPETVKISSL (233 aa)) are Cytoplasmic-facing. S458 is subject to Phosphoserine. Residues 474–489 (FEQQHHHLLHCLEKTT) form a mediates dendritic targeting region. The required for dendritic targeting stretch occupies residues 474–489 (FEQQHHHLLHCLEKTT). S555 is modified (phosphoserine). The disordered stretch occupies residues 601-636 (IPTPPANTPDESQPSSPGGGGGGASSTLRNSSLGTP).

It belongs to the potassium channel family. D (Shal) (TC 1.A.1.2) subfamily. Kv4.1/KCND1 sub-subfamily. In terms of assembly, component of heteromultimeric potassium channels. Identified in potassium channel complexes containing KCND1, KCND2, KCND3, KCNIP1, KCNIP2, KCNIP3, KCNIP4, DPP6 and DPP10.

It is found in the cell membrane. The enzyme catalyses K(+)(in) = K(+)(out). Functionally, A-type voltage-gated potassium channel that mediates transmembrane potassium transport in excitable membranes in the brain. Mediates A-type current I(SA) in suprachiasmatic nucleus (SCN) neurons. Exhibits a low-threshold A-type current with a hyperpolarized steady-state inactivation midpoint and the recovery process was steeply voltage-dependent, with recovery being markedly faster at more negative potentials. May regulates repetitive firing rates in the suprachiasmatic nucleus (SCN) neurons and circadian rhythms in neuronal excitability and behavior. Contributes to the regulation of the circadian rhythm of action potential firing in suprachiasmatic nucleus neurons, which regulates the circadian rhythm of locomotor activity. The regulatory subunit KCNIP1 modulates the kinetics of channel inactivation, increases the current amplitudes and accelerates recovery from inactivation, shifts activation in a depolarizing direction. The regulatory subunit DPP10 decreases the voltage sensitivity of the inactivation channel gating. This is A-type voltage-gated potassium channel KCND1 from Bos taurus (Bovine).